The primary structure comprises 44 residues: U4-ctenitoxin-Co1a (44 aa).

4 disulfide bridges follow: Cys-2–Cys-19, Cys-9–Cys-25, Cys-18–Cys-39, and Cys-27–Cys-37.

Expressed by the venom gland.

It is found in the secreted. Its function is as follows. Omega-agatoxins are antagonists of voltage-gated calcium channels (Cav). Toxic to mice by intracerebroventricular injection. The polypeptide is U4-ctenitoxin-Co1a (Ctenus ornatus (Brazilian spider)).